Consider the following 471-residue polypeptide: uncharacterized protein (471 aa).

The next 11 helical transmembrane spans lie at 15-35 (LWGPPLIILLTGTGLYFTILL), 66-86 (PLQALTSALSSTIGAANIVGV), 89-109 (AIMFGGPGAVFWMWLIALFAM), 147-167 (WLGVFFSVALIVELIPSIMVQ), 179-199 (FSFNKIYAGIGIAFLIGLVVI), 210-230 (EFVVPLMAGAYAGAGLLIVLM), 237-257 (AFFSLVFSNAFTSSSAVGGFA), 303-323 (VIGIVIDTLIICTTTAFIVLA), 353-373 (GYFVSVSLVFFVVSTIMVVIF), 386-406 (LAGHVIKFVYLAAIIIGAAGG), and 410-430 (IWGVLDLALVFIVVPNVIALL).

Belongs to the alanine or glycine:cation symporter (AGCS) (TC 2.A.25) family.

The protein resides in the cell membrane. This is an uncharacterized protein from Bacillus subtilis (strain 168).